We begin with the raw amino-acid sequence, 407 residues long: Putative F-box protein At2g16220 (407 aa).

In terms of domain architecture, F-box spans 1–45 (MNSHFLTNDLILEVLSRLPLKSVARFHCVSKRWASMFGSPYFKEL). Residues 385–407 (PPSVQPEYDESDSESEEDREIII) are disordered. Positions 391–407 (EYDESDSESEEDREIII) are enriched in acidic residues.

This chain is Putative F-box protein At2g16220, found in Arabidopsis thaliana (Mouse-ear cress).